We begin with the raw amino-acid sequence, 527 residues long: MPDIMPDDGLVLGLEGTAWNLSAALFGDDLVALHSSPYVPPKGGIHPREAAQHHASAMKEVVSRVLTEPERIRAVAFSQGPGLGPSLRTVATAARALSIALDVPLVGVNHCVAHVEIGRWATGFSDPIVLYASGANTQVLGYLNGRYRIFGETLDIGLGNGLDKFARSHDLPHPGGPAIERLAREGNYIELPYTVKGMDLAFSGLVSAAQESSAPLEDVCFGLQETAFAMCVEVTERALAHAGKDEVLLVGGVGANGRLQEMLRVMCEERGAAFAVPERTFLGDNGAMIAYTGKIMLEHGVVLPLDQSQIRPGYRADEVEVAWRTEPGEVFSIGPHEGGVARGAEAVVEIGEGNVIKRRTGKRYRYPALDRRLIAERTRAEARLIATARRAGVPTPVIRDITADTIVMERIKGEVLKYVTAPETIRLAGEAVGRLHGTGIVHGDLTTSNMIVRDGQCVLIDFGLASTSSEVESRGVDLHVFFQTLESTTENFQELKEAFVEGYTAVFPGAGEVLAREHEVELRGRYL.

A kae1 region spans residues 1-323 (MPDIMPDDGL…YRADEVEVAW (323 aa)). Residues His-110, His-114, and Tyr-131 each contribute to the Fe cation site. L-threonylcarbamoyladenylate-binding positions include 131 to 135 (YASGA), Asp-163, Gly-176, Glu-180, and Asn-256. Fe cation is bound at residue Asp-284. The Protein kinase domain occupies 333–527 (IGPHEGGVAR…HEVELRGRYL (195 aa)). ATP-binding positions include 340–348 (VARGAEAVV) and Lys-357. Asp-444 serves as the catalytic Proton acceptor; for kinase activity.

The protein in the N-terminal section; belongs to the KAE1 / TsaD family. It in the C-terminal section; belongs to the protein kinase superfamily. Tyr protein kinase family. BUD32 subfamily. In terms of assembly, component of the KEOPS complex that consists of Kae1, Bud32, Cgi121 and Pcc1; the whole complex dimerizes. Fe(2+) serves as cofactor.

The protein localises to the cytoplasm. The catalysed reaction is L-seryl-[protein] + ATP = O-phospho-L-seryl-[protein] + ADP + H(+). The enzyme catalyses L-threonyl-[protein] + ATP = O-phospho-L-threonyl-[protein] + ADP + H(+). It catalyses the reaction L-threonylcarbamoyladenylate + adenosine(37) in tRNA = N(6)-L-threonylcarbamoyladenosine(37) in tRNA + AMP + H(+). Its function is as follows. Required for the formation of a threonylcarbamoyl group on adenosine at position 37 (t(6)A37) in tRNAs that read codons beginning with adenine. Is a component of the KEOPS complex that is probably involved in the transfer of the threonylcarbamoyl moiety of threonylcarbamoyl-AMP (TC-AMP) to the N6 group of A37. The Kae1 domain likely plays a direct catalytic role in this reaction. The Bud32 domain probably displays kinase activity that regulates Kae1 function. The polypeptide is Probable bifunctional tRNA threonylcarbamoyladenosine biosynthesis protein (Methanoculleus marisnigri (strain ATCC 35101 / DSM 1498 / JR1)).